The primary structure comprises 666 residues: Peptidase S41 family protein phomP1' (666 aa).

The first 27 residues, 1-27 (MSSFLVQTAVVRLFLLGVVFWFPFALS), serve as a signal peptide directing secretion. N-linked (GlcNAc...) asparagine glycans are attached at residues asparagine 70, asparagine 214, and asparagine 234. The segment at 303–504 (DVAVLQITSF…LLQAQGVRTV (202 aa)) is peptidase S41 domain. Asparagine 555 and asparagine 612 each carry an N-linked (GlcNAc...) asparagine glycan.

Belongs to the peptidase S41A family.

The protein operates within mycotoxin biosynthesis. Functionally, peptidase S41 family protein; part of the gene cluster that mediates the biosynthesis of the phomopsins, a group of hexapeptide mycotoxins which infects lupins and causes lupinosis disease in livestock. Within the pathway, phomP1 and phomP1' are probably involved in the processing of the phomA and phomA' precursors. The pathway starts with the processing of the precursor phomA by several endopeptidases including kexin proteases as well as the cluster-specific S41 family peptidase phomP1 and the oligopeptidase phomG to produce 10 identical copies of the hexapeptide Tyr-Val-Ile-Pro-Ile-Asp. After being excised from the precursor peptide, the core peptides are cyclized and modified post-translationally by enzymes encoded within the gene cluster. The timing and order of proteolysis of the phomA precursor and PTMs are still unknown. Two tyrosinase-like enzymes, phomQ1 and phomQ2, catalyze the chlorination and hydroxylation of Tyr, respectively. PhomYb, is proposed to be involved in the construction of the macrocyclic structure. The other 4 ustYa family proteins may be involved in PTMs that generate the unique structure of phomopsin A. PhomYa is required for the hydroxylation of C-beta of Tyr. PhomYc, phomYd, and phomYe are responsible for the biosynthesis of 2,3-dehydroisoleucine (dIle), 2,3-dehydroaspartic acid (dAsp), and 3,4-dehydroproline (dPro), respectively. While dIle formation by phomYc is indispensable for the installation of dAsp by phomYd, the order of the other PTMs have not been elucidated yet. Most of the biosynthetic enzymes likely have broad substrate specificity, and thus, there might be a metabolic grid from a precursor to phomopsin A. The enzyme(s) responsible for the biosynthesis of 3,4-dehydrovaline (dVal) have also not been identified yet. Finally, phomM acts as an S-adenosylmethionine-dependent alpha-N-methyltransferase that catalyzes two successive N-methylation reactions, converting N-desmethyl-phomopsin A to phomopsin A and phomopsin A further to an N,N-dimethylated congener called phomopsin E. This is Peptidase S41 family protein phomP1' from Diaporthe leptostromiformis (Lupinosis disease fungus).